A 261-amino-acid chain; its full sequence is UPF0328 protein ECU03_1620 (261 aa).

This sequence belongs to the UPF0328 family.

This Encephalitozoon cuniculi (strain GB-M1) (Microsporidian parasite) protein is UPF0328 protein ECU03_1620.